We begin with the raw amino-acid sequence, 273 residues long: Large ribosomal subunit protein uL2 (273 aa).

Residues 221–263 are disordered; sequence RGTAMNPVDHPHGGGEGRNFGKHPVSPWGLQTKGKKTRKNKRT. Basic residues predominate over residues 253–263; the sequence is KGKKTRKNKRT.

This sequence belongs to the universal ribosomal protein uL2 family. Part of the 50S ribosomal subunit. Forms a bridge to the 30S subunit in the 70S ribosome.

In terms of biological role, one of the primary rRNA binding proteins. Required for association of the 30S and 50S subunits to form the 70S ribosome, for tRNA binding and peptide bond formation. It has been suggested to have peptidyltransferase activity; this is somewhat controversial. Makes several contacts with the 16S rRNA in the 70S ribosome. This is Large ribosomal subunit protein uL2 from Buchnera aphidicola subsp. Baizongia pistaciae (strain Bp).